A 427-amino-acid polypeptide reads, in one-letter code: Glutamate-1-semialdehyde 2,1-aminomutase (427 aa).

The residue at position 265 (K265) is an N6-(pyridoxal phosphate)lysine.

Belongs to the class-III pyridoxal-phosphate-dependent aminotransferase family. HemL subfamily. In terms of assembly, homodimer. Pyridoxal 5'-phosphate is required as a cofactor.

The protein localises to the cytoplasm. It carries out the reaction (S)-4-amino-5-oxopentanoate = 5-aminolevulinate. The protein operates within porphyrin-containing compound metabolism; protoporphyrin-IX biosynthesis; 5-aminolevulinate from L-glutamyl-tRNA(Glu): step 2/2. This Bordetella avium (strain 197N) protein is Glutamate-1-semialdehyde 2,1-aminomutase.